The sequence spans 700 residues: Acyl-coenzyme A oxidase 2 (700 aa).

Belongs to the acyl-CoA oxidase family. As to quaternary structure, heteropentamer composed of five different subunits. FAD is required as a cofactor.

It localises to the peroxisome. The enzyme catalyses a 2,3-saturated acyl-CoA + O2 = a (2E)-enoyl-CoA + H2O2. It participates in lipid metabolism; peroxisomal fatty acid beta-oxidation. Functionally, oxidizes strain chain acyl-CoAs with a chain length of 10 to 14 carbons. Also active toward the 2S isomers of acyl-CoA-esters containing a 2-methyl group. The sequence is that of Acyl-coenzyme A oxidase 2 (POX2) from Yarrowia lipolytica (strain CLIB 122 / E 150) (Yeast).